We begin with the raw amino-acid sequence, 409 residues long: Putative actin-fragmin kinase DDB_G0268812 (409 aa).

Positions 1-45 (MKTFRDFKKKIKNNNNNKNNKNNNINNNNSNNNKNNKNNNNNNSN) are disordered. Residues 5 to 46 (RDFKKKIKNNNNNKNNKNNNINNNNSNNNKNNKNNNNNNSNN) are a coiled coil. Residues 13 to 45 (NNNNNKNNKNNNINNNNSNNNKNNKNNNNNNSN) show a composition bias toward low complexity.

This sequence belongs to the protein kinase superfamily. AFK Ser/Thr protein kinase family.

The protein is Putative actin-fragmin kinase DDB_G0268812 of Dictyostelium discoideum (Social amoeba).